Reading from the N-terminus, the 485-residue chain is Probable RNA-binding protein 46 (485 aa).

RRM domains are found at residues 61–139, 141–223, and 236–308; these read CEVF…VSLD, CRLF…WADP, and KVLY…LAKP.

In terms of assembly, interacts with YTHDC2, MEIOC, MOV10, CNOT6L, DDX4, UPF1 and PABPC1.

Its subcellular location is the cytoplasm. Essential for male and female fertility, playing a crucial role in regulating germ cell development by ensuring the proper progression of meiosis prophase I. Regulates mitotic-to-meiotic transition in spermatogenesis by forming a complex with MEIOC and YTHDC2 which recognizes and down-regulates mitotic transcripts for a successful meiotic entry. Required for normal synaptonemal complex formation during meiosis, binding meiotic cohesin subunit mRNAs containing GCCUAU/GUUCGA motifs in their 3'UTRs regions and positively regulating their translation. Required for spermatogonial differentiation in both developing and adult testis. The sequence is that of Probable RNA-binding protein 46 (RBM46) from Macaca fascicularis (Crab-eating macaque).